The primary structure comprises 251 residues: Small ribosomal subunit protein uS2 (251 aa).

Belongs to the universal ribosomal protein uS2 family.

The chain is Small ribosomal subunit protein uS2 from Synechococcus sp. (strain ATCC 27144 / PCC 6301 / SAUG 1402/1) (Anacystis nidulans).